The sequence spans 497 residues: Long chain base biosynthesis protein 2c (497 aa).

The helical transmembrane segment at valine 4–histidine 24 threads the bilayer. At lysine 319 the chain carries N6-(pyridoxal phosphate)lysine.

This sequence belongs to the class-II pyridoxal-phosphate-dependent aminotransferase family. Heterodimer with LCB1. Component of the serine palmitoyltransferase (SPT) complex, composed of LCB1 and LCB2. Requires pyridoxal 5'-phosphate as cofactor.

The protein localises to the endoplasmic reticulum membrane. The catalysed reaction is L-serine + hexadecanoyl-CoA + H(+) = 3-oxosphinganine + CO2 + CoA. It participates in lipid metabolism; sphingolipid metabolism. In terms of biological role, serine palmitoyltransferase (SPT). The heterodimer formed with LCB1 constitutes the catalytic core. This is Long chain base biosynthesis protein 2c from Oryza sativa subsp. japonica (Rice).